Reading from the N-terminus, the 288-residue chain is Glycine--tRNA ligase alpha subunit (288 aa).

The protein belongs to the class-II aminoacyl-tRNA synthetase family. Tetramer of two alpha and two beta subunits.

It localises to the cytoplasm. It carries out the reaction tRNA(Gly) + glycine + ATP = glycyl-tRNA(Gly) + AMP + diphosphate. The chain is Glycine--tRNA ligase alpha subunit from Rickettsia africae (strain ESF-5).